The chain runs to 1091 residues: Voltage-dependent calcium channel subunit alpha-2/delta-3 (1091 aa).

Residues 1-33 (MAGPGSLCCASRGASALLATALLYAALGDVVRS) form the signal peptide. Residues 34–1068 (EQQIPLSVVK…HPEENARECG (1035 aa)) lie on the Extracellular side of the membrane. An N-linked (GlcNAc...) asparagine glycan is attached at Asn-166. In terms of domain architecture, VWFA spans 256–438 (DVVILVDVSG…ENVMEYLHVL (183 aa)). A divalent metal cation-binding residues include Asp-262, Ser-264, and Ser-266. The MIDAS-like motif motif lies at 262-266 (DVSGS). Residue Asn-309 is glycosylated (N-linked (GlcNAc...) asparagine). Cys-412 and Cys-1055 form a disulfide bridge. The 98-residue stretch at 452–549 (WTEAYIDSTL…RPLYEEGKKR (98 aa)) folds into the Cache domain. 2 N-linked (GlcNAc...) asparagine glycosylation sites follow: Asn-553 and Asn-632. Residue Tyr-924 is modified to Phosphotyrosine. The chain crosses the membrane as a helical span at residues 1069-1089 (GASSLQAQAALLLLPLVSSLF). The Cytoplasmic segment spans residues 1090 to 1091 (SR).

It belongs to the calcium channel subunit alpha-2/delta family. In terms of assembly, dimer formed of alpha-2-2 and delta-2 chains; disulfide-linked. Voltage-dependent calcium channels are multisubunit complexes, consisting of alpha-1 (CACNA1), alpha-2 (CACNA2D), beta (CACNB) and delta (CACNA2D) subunits in a 1:1:1:1 ratio. In terms of processing, N-glycosylated. May be proteolytically processed into subunits alpha-2-3 and delta-3 that are disulfide-linked. It is however unclear whether such cleavage really takes place in vivo and has a functional role. As to expression, brain-specific. Predominantly expressed in the caudate putamen, entorhinal complex, hippocampus and cortex.

The protein localises to the membrane. Its function is as follows. The alpha-2/delta subunit of voltage-dependent calcium channels regulates calcium current density and activation/inactivation kinetics of the calcium channel. Acts as a regulatory subunit for P/Q-type calcium channel (CACNA1A), N-type (CACNA1B), L-type (CACNA1C OR CACNA1D) but not T-type (CACNA1G). The sequence is that of Voltage-dependent calcium channel subunit alpha-2/delta-3 (Cacna2d3) from Mus musculus (Mouse).